The primary structure comprises 1007 residues: RNA-binding protein 26 (1007 aa).

A Glycyl lysine isopeptide (Lys-Gly) (interchain with G-Cter in SUMO2) cross-link involves residue Lys-94. Residue Lys-106 forms a Glycyl lysine isopeptide (Lys-Gly) (interchain with G-Cter in SUMO1); alternate linkage. Lys-106 participates in a covalent cross-link: Glycyl lysine isopeptide (Lys-Gly) (interchain with G-Cter in SUMO2); alternate. Residues 106–118 (KKEEITKEEEREK) are compositionally biased toward basic and acidic residues. Residues 106–241 (KKEEITKEEE…YTPVSSVPSI (136 aa)) form a disordered region. Ser-127 carries the post-translational modification Phosphoserine. The span at 134–168 (RYRENRSRDERKKDDRSRKRDYDRNPPRRDSYRDR) shows a compositional bias: basic and acidic residues. Positions 169-186 (YNRRRGRSRSYSRSRSRS) are enriched in basic residues. 2 stretches are compositionally biased toward basic and acidic residues: residues 187–201 (WSKE…DRSR) and 209–227 (RSRE…RTDP). Residues 228–241 (LENNYTPVSSVPSI) are compositionally biased toward polar residues. The segment at 288 to 316 (PMPKKRCRDYDEKGFCMRGDMCPFDHGSD) adopts a C3H1-type zinc-finger fold. The segment covering 334 to 388 (QPPVVEGPPPPGLPPPPPILTPPPVNLRPPVPPPGPLPPSLPPVTGPPPPLPPLQ) has biased composition (pro residues). Disordered regions lie at residues 334–404 (QPPV…SSVP) and 460–519 (IGLT…TNSP). Positions 394-404 (APPNSATSSVP) are enriched in low complexity. Ser-496 carries the post-translational modification Phosphoserine. Residue Lys-510 is modified to N6-acetyllysine. Ser-518 is subject to Phosphoserine. The RRM 1 domain occupies 532-606 (TKLELRKVPP…RFIKVYWHRE (75 aa)). Ser-616 bears the Phosphoserine mark. Coiled coils occupy residues 719–795 (DNNE…KAAS) and 823–847 (KKMQ…EAAK). A disordered region spans residues 853–884 (SGRGRGIHSRGRGAVHGRGRGRGRGRGVPGHA). A compositionally biased stretch (basic residues) spans 857–877 (RGIHSRGRGAVHGRGRGRGRG). One can recognise an RRM 2 domain in the interval 891-960 (RALEISAFTE…QDLKLAWNKP (70 aa)). Positions 966 to 1007 (AVETEEVEPDEEEFQEESLVDDSLLQDDDEEEEDNESRSWRR) are disordered. Residues 968–1000 (ETEEVEPDEEEFQEESLVDDSLLQDDDEEEEDN) show a composition bias toward acidic residues.

In terms of biological role, may be involved in the turnover of nuclear polyadenylated (pA+) RNA. The polypeptide is RNA-binding protein 26 (Homo sapiens (Human)).